Consider the following 141-residue polypeptide: Large ribosomal subunit protein uL11 (141 aa).

Belongs to the universal ribosomal protein uL11 family. Part of the ribosomal stalk of the 50S ribosomal subunit. Interacts with L10 and the large rRNA to form the base of the stalk. L10 forms an elongated spine to which L12 dimers bind in a sequential fashion forming a multimeric L10(L12)X complex. In terms of processing, one or more lysine residues are methylated.

Forms part of the ribosomal stalk which helps the ribosome interact with GTP-bound translation factors. The polypeptide is Large ribosomal subunit protein uL11 (Coprothermobacter proteolyticus (strain ATCC 35245 / DSM 5265 / OCM 4 / BT)).